A 159-amino-acid chain; its full sequence is Ribosomal RNA large subunit methyltransferase H (159 aa).

S-adenosyl-L-methionine contacts are provided by residues Gly108 and 127-132 (FGKLTM).

It belongs to the RNA methyltransferase RlmH family. As to quaternary structure, homodimer.

The protein resides in the cytoplasm. It catalyses the reaction pseudouridine(1915) in 23S rRNA + S-adenosyl-L-methionine = N(3)-methylpseudouridine(1915) in 23S rRNA + S-adenosyl-L-homocysteine + H(+). Functionally, specifically methylates the pseudouridine at position 1915 (m3Psi1915) in 23S rRNA. The polypeptide is Ribosomal RNA large subunit methyltransferase H (Lactobacillus acidophilus (strain ATCC 700396 / NCK56 / N2 / NCFM)).